The sequence spans 599 residues: Elongation factor 4 (599 aa).

The region spanning 5 to 187 is the tr-type G domain; it reads NHIRNFSIIA…QIVQLVPPPE (183 aa). GTP is bound by residues 17 to 22 and 134 to 137; these read DHGKST and NKMD.

The protein belongs to the TRAFAC class translation factor GTPase superfamily. Classic translation factor GTPase family. LepA subfamily.

The protein localises to the cell inner membrane. The catalysed reaction is GTP + H2O = GDP + phosphate + H(+). Its function is as follows. Required for accurate and efficient protein synthesis under certain stress conditions. May act as a fidelity factor of the translation reaction, by catalyzing a one-codon backward translocation of tRNAs on improperly translocated ribosomes. Back-translocation proceeds from a post-translocation (POST) complex to a pre-translocation (PRE) complex, thus giving elongation factor G a second chance to translocate the tRNAs correctly. Binds to ribosomes in a GTP-dependent manner. The protein is Elongation factor 4 of Hahella chejuensis (strain KCTC 2396).